Here is a 320-residue protein sequence, read N- to C-terminus: Pyrroline-5-carboxylate reductase (320 aa).

Belongs to the pyrroline-5-carboxylate reductase family.

The enzyme catalyses L-proline + NADP(+) = (S)-1-pyrroline-5-carboxylate + NADPH + 2 H(+). It carries out the reaction L-proline + NAD(+) = (S)-1-pyrroline-5-carboxylate + NADH + 2 H(+). It functions in the pathway amino-acid biosynthesis; L-proline biosynthesis; L-proline from L-glutamate 5-semialdehyde: step 1/1. The protein is Pyrroline-5-carboxylate reductase (P5CR) of Lophium arboricola (Zalerion arboricola).